The following is a 307-amino-acid chain: Probable aspartoacylase (307 aa).

Residues His-13 and Glu-16 each contribute to the Zn(2+) site. Substrate is bound by residues Arg-55 and 62–63; that span reads NR. His-105 provides a ligand contact to Zn(2+). Residues Glu-163 and Tyr-276 each contribute to the substrate site.

The protein belongs to the AspA/AstE family. Aspartoacylase subfamily. Zn(2+) serves as cofactor.

It catalyses the reaction an N-acyl-L-aspartate + H2O = a carboxylate + L-aspartate. This Prochlorococcus marinus (strain SARG / CCMP1375 / SS120) protein is Probable aspartoacylase.